The sequence spans 250 residues: L-cystine transport system ATP-binding protein TcyN (250 aa).

Residues 4 to 244 enclose the ABC transporter domain; the sequence is IEVKNLVKKF…PEQPRTRQFL (241 aa). Residue 36 to 43 coordinates ATP; it reads GPSGSGKT.

This sequence belongs to the ABC transporter superfamily. The complex is composed of two ATP-binding proteins (TcyN), two transmembrane proteins (TcyL) and a solute-binding protein (TcyJ).

It localises to the cell inner membrane. The enzyme catalyses L-cystine(out) + ATP + H2O = L-cystine(in) + ADP + phosphate + H(+). It catalyses the reaction D-cystine(out) + ATP + H2O = D-cystine(in) + ADP + phosphate + H(+). Its activity is regulated as follows. The TcyJLN system is inhibited by L-cystine, L-cysteine, DL-2,6-diaminopimelic acid and L-cystathionine, and is stimulated by D-cysteine. Functionally, part of the ABC transporter complex TcyJLN involved in L-cystine import. This high affinity cystine transporter is involved in resistance to oxidative stress by forming a L-cysteine/L-cystine shuttle system with the EamA transporter, which exports L-cysteine as reducing equivalents to the periplasm to prevent the cells from oxidative stress. Exported L-cysteine can reduce the periplasmic hydrogen peroxide to water, and then generated L-cystine is imported back into the cytoplasm via the TcyJLN complex. Functions at low cystine concentrations. The system can also transport L-cysteine, diaminopimelic acid (DAP), djenkolate, lanthionine, D-cystine, homocystine, and it mediates accumulation of the toxic compounds L-selenaproline (SCA) and L-selenocystine (SeCys). Could also facilitate threonine efflux. Responsible for energy coupling to the transport system. The protein is L-cystine transport system ATP-binding protein TcyN of Escherichia coli (strain K12).